The primary structure comprises 255 residues: Geranylgeranylglyceryl phosphate synthase (255 aa).

Positions 34 and 64 each coordinate Mg(2+). Sn-glycerol 1-phosphate-binding positions include 182-188 (YLEAGSG), 213-214 (GG), and 235-236 (GN).

This sequence belongs to the GGGP/HepGP synthase family. Group II subfamily. Requires Mg(2+) as cofactor.

Its subcellular location is the cytoplasm. It catalyses the reaction sn-glycerol 1-phosphate + (2E,6E,10E)-geranylgeranyl diphosphate = sn-3-O-(geranylgeranyl)glycerol 1-phosphate + diphosphate. It functions in the pathway membrane lipid metabolism; glycerophospholipid metabolism. Its function is as follows. Prenyltransferase that catalyzes the transfer of the geranylgeranyl moiety of geranylgeranyl diphosphate (GGPP) to the C3 hydroxyl of sn-glycerol-1-phosphate (G1P). This reaction is the first ether-bond-formation step in the biosynthesis of archaeal membrane lipids. This is Geranylgeranylglyceryl phosphate synthase from Saccharolobus islandicus (strain M.16.27) (Sulfolobus islandicus).